Here is a 106-residue protein sequence, read N- to C-terminus: UPF0145 protein (106 aa).

This sequence belongs to the UPF0145 family.

The protein is UPF0145 protein of Listeria grayi (Listeria murrayi).